The following is a 138-amino-acid chain: Large ribosomal subunit protein eL14A (138 aa).

Ser-2 carries the N-acetylserine modification.

This sequence belongs to the eukaryotic ribosomal protein eL14 family. As to quaternary structure, component of the large ribosomal subunit (LSU). Mature yeast ribosomes consist of a small (40S) and a large (60S) subunit. The 40S small subunit contains 1 molecule of ribosomal RNA (18S rRNA) and 33 different proteins (encoded by 57 genes). The large 60S subunit contains 3 rRNA molecules (25S, 5.8S and 5S rRNA) and 46 different proteins (encoded by 81 genes). N-terminally acetylated by acetyltransferase NatA.

It localises to the cytoplasm. Its function is as follows. Component of the ribosome, a large ribonucleoprotein complex responsible for the synthesis of proteins in the cell. The small ribosomal subunit (SSU) binds messenger RNAs (mRNAs) and translates the encoded message by selecting cognate aminoacyl-transfer RNA (tRNA) molecules. The large subunit (LSU) contains the ribosomal catalytic site termed the peptidyl transferase center (PTC), which catalyzes the formation of peptide bonds, thereby polymerizing the amino acids delivered by tRNAs into a polypeptide chain. The nascent polypeptides leave the ribosome through a tunnel in the LSU and interact with protein factors that function in enzymatic processing, targeting, and the membrane insertion of nascent chains at the exit of the ribosomal tunnel. This chain is Large ribosomal subunit protein eL14A, found in Saccharomyces cerevisiae (strain ATCC 204508 / S288c) (Baker's yeast).